The sequence spans 425 residues: D-amino acid dehydrogenase 2 (425 aa).

3 to 17 (ITVVGAGIVGISTAY) lines the FAD pocket.

The protein belongs to the DadA oxidoreductase family. FAD serves as cofactor.

It catalyses the reaction a D-alpha-amino acid + A + H2O = a 2-oxocarboxylate + AH2 + NH4(+). Oxidative deamination of D-amino acids. The chain is D-amino acid dehydrogenase 2 (dadA2) from Ralstonia nicotianae (strain ATCC BAA-1114 / GMI1000) (Ralstonia solanacearum).